The sequence spans 258 residues: Regulatory protein RecX (258 aa).

The protein belongs to the RecX family.

It is found in the cytoplasm. In terms of biological role, modulates RecA activity. This is Regulatory protein RecX from Streptococcus uberis (strain ATCC BAA-854 / 0140J).